A 73-amino-acid polypeptide reads, in one-letter code: Large ribosomal subunit protein uL30 (73 aa).

It belongs to the universal ribosomal protein uL30 family. As to quaternary structure, part of the 50S ribosomal subunit.

This is Large ribosomal subunit protein uL30 from Borrelia hermsii (strain HS1 / DAH).